The primary structure comprises 381 residues: Carboxylesterase 5A (381 aa).

Ser-108 acts as the Acyl-ester intermediate in catalysis. An intrachain disulfide couples Cys-162 to Cys-173. N-linked (GlcNAc...) asparagine glycosylation occurs at Asn-163. Glu-227 (charge relay system) is an active-site residue. Asn-245 carries N-linked (GlcNAc...) asparagine glycosylation. The active-site Charge relay system is the His-336.

It belongs to the type-B carboxylesterase/lipase family. As to quaternary structure, component of a epididymal complex at least composed of soluble form of prion protein PRNP, CLU, BPI, CES5A, MANBA and GLB1. In terms of processing, N-glycosylated. Detected in corpus and cauda epididymal fluid. Present in seminal fluid but not found to be associated with sperm (at protein level). Not expressed in other tissues.

It is found in the secreted. The enzyme catalyses a carboxylic ester + H2O = an alcohol + a carboxylate + H(+). In terms of biological role, involved in the detoxification of xenobiotics and in the activation of ester and amide prodrugs. The protein is Carboxylesterase 5A (CES5A) of Ovis aries (Sheep).